The chain runs to 125 residues: Alpha-endosulfine (125 aa).

Residues 1–37 are compositionally biased toward basic and acidic residues; the sequence is MSDKYIGDSHLEETGEEKQDSQEKEAVTPEKAEEQKL. Positions 1 to 53 are disordered; sequence MSDKYIGDSHLEETGEEKQDSQEKEAVTPEKAEEQKLKAKYPNLGQKPGGSDF. Position 28 is a phosphothreonine; by CDK2 (Thr28). Phosphoserine; by GWL is present on Ser67. Residues 81–108 are disordered; that stretch reads QLPCAGPDKNLVTGDHIPTPQDLPQRKS. Residue Thr99 is modified to Phosphothreonine; by CDK2. Ser109 is modified (phosphoserine; by PKA).

It belongs to the endosulfine family. Post-translationally, phosphorylation at Ser-67 by gwl during mitosis is essential for interaction with ppp2r2d (PR55-delta) and subsequent inactivation of PP2A.

It localises to the cytoplasm. Its function is as follows. Protein phosphatase inhibitor that specifically inhibits protein phosphatase 2A (PP2A) during mitosis. When phosphorylated at Ser-67 during mitosis, specifically interacts with ppp2r2d (PR55-delta) and inhibits its activity, leading to inactivation of PP2A, an essential condition to keep cyclin-B1-CDK1 activity high during M phase. The sequence is that of Alpha-endosulfine (ensa) from Xenopus tropicalis (Western clawed frog).